The primary structure comprises 353 residues: Polycomb group RING finger protein 6 (353 aa).

A disordered region spans residues 1 to 116; sequence MDEAETDATE…FSLRLESGRA (116 aa). Basic and acidic residues predominate over residues 9–19; it reads TENKRASEAKR. Positions 23-39 are enriched in pro residues; the sequence is MPPPPPPPPPISPPALI. A Phosphoserine modification is found at serine 34. Residues 40 to 52 are compositionally biased toward low complexity; it reads PAPAAGEEGPASL. Basic and acidic residues predominate over residues 69-82; it reads EPERSLGRLRGRFE. The stretch at 71–112 forms a coiled coil; the sequence is ERSLGRLRGRFEDYDEELEEEEEMEEEEEEEEEMSHFSLRLE. The segment covering 83 to 103 has biased composition (acidic residues); that stretch reads DYDEELEEEEEMEEEEEEEEE. Serine 118 is modified (phosphoserine). The RING-type zinc-finger motif lies at 137–176; that stretch reads CSICKGYLIDATTITECLHTFCKSCIVRHFYYSNRCPKCN. Residues lysine 226 and lysine 237 each participate in a glycyl lysine isopeptide (Lys-Gly) (interchain with G-Cter in SUMO2) cross-link.

Component of a PRC1-like complex. Interacts with BMI1/PCGF4, RING1 and RNF2. Interacts with KDM5D. Interacts with CBX4, CBX6, CBX7 and CBX8. Phosphorylated during mitosis. As to expression, expressed in ovary, testis, stomach, liver, thymus and kidney (at protein level).

It localises to the nucleus. In terms of biological role, transcriptional repressor. May modulate the levels of histone H3K4Me3 by activating KDM5D histone demethylase. Component of a Polycomb group (PcG) multiprotein PRC1-like complex, a complex class required to maintain the transcriptionally repressive state of many genes, including Hox genes, throughout development. PcG PRC1 complex acts via chromatin remodeling and modification of histones; it mediates monoubiquitination of histone H2A 'Lys-119', rendering chromatin heritably changed in its expressibility. Within the PRC1-like complex, regulates RNF2 ubiquitin ligase activity. The chain is Polycomb group RING finger protein 6 (Pcgf6) from Mus musculus (Mouse).